The sequence spans 252 residues: Hydroxyacylglutathione hydrolase (252 aa).

Residues H54, H56, D58, H59, H111, D130, and H170 each coordinate Zn(2+).

The protein belongs to the metallo-beta-lactamase superfamily. Glyoxalase II family. Monomer. Zn(2+) is required as a cofactor.

The enzyme catalyses an S-(2-hydroxyacyl)glutathione + H2O = a 2-hydroxy carboxylate + glutathione + H(+). Its pathway is secondary metabolite metabolism; methylglyoxal degradation; (R)-lactate from methylglyoxal: step 2/2. Functionally, thiolesterase that catalyzes the hydrolysis of S-D-lactoyl-glutathione to form glutathione and D-lactic acid. The protein is Hydroxyacylglutathione hydrolase of Francisella tularensis subsp. holarctica (strain FTNF002-00 / FTA).